The chain runs to 1076 residues: Serine/threonine-protein phosphatase 6 regulatory ankyrin repeat subunit C (1076 aa).

ANK repeat units follow at residues 7–36 (TDQPPLVQAIFSRDVEEVRSLLSQKENINV), 40–69 (ERRTPLHAAAYVGDVPILQLLLMSGANVNA), 73–102 (LWLTPLHRAAASRNEKVLGLLLAHSADVNA), 106–135 (LWQTPLHVAAANRATKCAEALAPLLSSLNV), 139–168 (SGRSALHHAVHSGHLETVNLLLNKGASLNV), 172–201 (KERQPLHWAAFLGHLEVLKLLVARGADLGC), 205–234 (KGYGLLHTAAASGQIEVVKYLLRMGAEIDE), 238–267 (FGNTALHIACYLGQDAVAIELVNAGANVNQ), 271–301 (KGFTPLHVAAVSTNGALCLELLVNNGADVNY), 305–334 (EGKSPLHMAAIHGRFTRSQILIQNGSEIDC), 338–367 (FGNTPLHVAARYGHELLISTLMTNGADTAR), 371–400 (HDMFPLHLAVLFGFSDCCRKLLSSGQLYSI), 422–451 (LGRTCLHAAASGGNVECLNLLLSSGADLRR), 455–484 (FGRTPLHYAAANGSYQCAVTLVTAGAGVNE), 488–545 (KGCS…DPSL), 549–579 (QGYTAVHYAAAYGNRQNLELLLEMSFNCLED), 584–613 (IPVSPLHLAAYNGHCEALKTLAETLVNLDV), 617–646 (KGRTALFLATERGSTECVEVLTAHGASALI), 651–680 (RKWTPLHAAAASGHTDSLHLLIDSGERADI), 687–716 (YGQTPLMLAIMNGHVDCVHLLLEKGSTADA), 720–749 (RGRTALHRGAVTGCEDCLAALLDHDAFVLC), 753–782 (KGRTPIHLASACGHTAVLRTLLQAALSTDP), 790–819 (SGYSPMHWASYTGHEDCLELLLEHSPFSYL), 822–852 (NPFTPLHCAVINNQDSTTEMLLGALGAKIVN), 857–886 (KGRTPLHAAAFADNVSGLRMLLQHQAEVNA), 890–920 (TGRTALMTAAENGQTAAVEFLLYRGKADLTV), 924–953 (NKNTALHLACSKGHEKCALMILAETQDLGL), and 960–989 (ALQMPLHIAARNGLASVVQALLSHGATVLA). Basic and acidic residues predominate over residues 502 to 514 (YRRAEPHTPSSHD). Residues 502–522 (YRRAEPHTPSSHDAEEDEPLK) are disordered. A phosphoserine mark is found at Ser1028 and Ser1075.

Protein phosphatase 6 (PP6) holoenzyme is proposed to be a heterotrimeric complex formed by the catalytic subunit, a SAPS domain-containing subunit (PP6R) and an ankyrin repeat-domain containing regulatory subunit (ARS). Interacts with PPP6R1.

Its function is as follows. Putative regulatory subunit of protein phosphatase 6 (PP6) that may be involved in the recognition of phosphoprotein substrates. The protein is Serine/threonine-protein phosphatase 6 regulatory ankyrin repeat subunit C (ANKRD52) of Homo sapiens (Human).